Reading from the N-terminus, the 315-residue chain is Olfactory receptor 8J3 (315 aa).

Residues 1-25 (MAPENFTRVTEFILTGVSSCPELQI) are Extracellular-facing. An N-linked (GlcNAc...) asparagine glycan is attached at Asn-5. The helical transmembrane segment at 26 to 46 (PLFLVFLVLYVLTMAGNLGII) threads the bilayer. Residues 47–54 (TLTSVDSR) are Cytoplasmic-facing. A helical membrane pass occupies residues 55–75 (LQNPMYFFLRHLAIINLGNST). Over 76-99 (VIAPKMLMNFLVKKKTTSFYECAT) the chain is Extracellular. Residues Cys-97 and Cys-189 are joined by a disulfide bond. A helical membrane pass occupies residues 100–120 (QLGGFLFFIVSEVMMLAVMAY). The Cytoplasmic segment spans residues 121–139 (DRYVAICNPLLYMVVVSRR). Residues 140 to 160 (LCLLLVSLTYLYGFSTAIVVS) form a helical membrane-spanning segment. At 161-197 (PCIFSVSYCSSNIINHFYCDIAPLLALSCSDTYIPET) the chain is on the extracellular side. The chain crosses the membrane as a helical span at residues 198 to 217 (IVFISAATNLVFSMITVLVS). At 218 to 237 (YFNIVLSILRIRSPEGRKKA) the chain is on the cytoplasmic side. The chain crosses the membrane as a helical span at residues 238 to 258 (FSTCASHMIAVTVFYGTMLFM). Over 259–271 (YLQPQTNHSLDTD) the chain is Extracellular. N-linked (GlcNAc...) asparagine glycosylation is present at Asn-265. A helical transmembrane segment spans residues 272 to 292 (KMASVFYTLVIPMLNPLIYSL). Residues 293 to 315 (RNNDVNVALKKFMENPCYSFKSM) are Cytoplasmic-facing.

The protein belongs to the G-protein coupled receptor 1 family.

Its subcellular location is the cell membrane. In terms of biological role, odorant receptor. This chain is Olfactory receptor 8J3 (OR8J3), found in Homo sapiens (Human).